A 72-amino-acid polypeptide reads, in one-letter code: Caerin-regulated peptide (72 aa).

An N-terminal signal peptide occupies residues 1–22 (MAFLKKSLLLVLFLGLVSLSIC). The propeptide occupies 23–43 (DEEKRENEDEEEQEDDEQSEE). A disordered region spans residues 24–46 (EEKRENEDEEEQEDDEQSEEKRG). Residues 30–41 (EDEEEQEDDEQS) show a composition bias toward acidic residues.

Expressed by the skin glands.

It localises to the secreted. In terms of biological role, has antibacterial activity against Gram-positive bacterium M.luteus NCT C2665 and against Gram-negative bacterium E.coli K12D31. This Agalychnis callidryas (Red-eyed tree frog) protein is Caerin-regulated peptide.